The sequence spans 318 residues: Oncosphere antigen A (318 aa).

Fibronectin type-III domains lie at 6–103 (IPQN…TPLP), 109–207 (KPSF…ISRA), and 211–308 (VPQN…TPSV).

The polypeptide is Oncosphere antigen A (ONCA) (Hydatigena taeniaeformis (Feline tapeworm)).